A 259-amino-acid polypeptide reads, in one-letter code: 1,2-dihydroxy-1,2-dihydronaphthalene dehydrogenase (259 aa).

Residues 8–35 (AITG…SALV) and Asp58 each bind NAD(+). A substrate-binding site is contributed by Ser140. The active-site Proton acceptor is the Tyr153. Lys157 is a binding site for NAD(+).

This sequence belongs to the short-chain dehydrogenases/reductases (SDR) family.

The catalysed reaction is (1R,2S)-1,2-dihydronaphthalene-1,2-diol + NAD(+) = naphthalene-1,2-diol + NADH + H(+). It functions in the pathway aromatic compound metabolism; naphthalene degradation. Catalyzes the oxidation of naphthalene dihydrodiol into 1,2-dihydroxynaphthalene. In Ralstonia sp, this protein is 1,2-dihydroxy-1,2-dihydronaphthalene dehydrogenase.